The following is a 417-amino-acid chain: MSLSNKLSVKDLNVTGKRVFIRVDFNVPLDGKTITNNQRIVAALPTIKYVEEQKPKCIILASHLGRPNGERNEKYSLAPVAAELEKLLGQKVTFLDDCVGPEVTKAVDSATEGQIFLLENLRFHIEEEGSAKDKDGKKTKADPEAVKKFREQLTSLADVYVNDAFGTAHRAHSSMVGLEVPERAAGFLMSKELEYFAKALENPQRPFLAILGGAKVSDKIQLIDNLLDKVDMLIVGGGMAFTFKKVLNNMPIGDSLFDEAGAKNVENLVAKAKKNNVELILPVDFVTADKFDKDAEVSTADDVTGIPDKWMGLDCGPKSRKLFADAVAKAKTIVWNGPPGVFEFDKFAEGTKSLLDDAVKSAEVGNIVIIGGGDTATVAKKYGVVDKLSHVSTGGGASLELLEGKELPGVTALSNKA.

(2R)-3-phosphoglycerate-binding residues include Val-23, Asp-24, Phe-25, Asn-26, Gln-38, Arg-39, Ser-62, His-63, Gly-65, Arg-66, Leu-121, Arg-122, His-169, and Arg-170. Gly-213 is a binding site for ADP. Gly-213 lines the CDP pocket. Ala-214 and Lys-215 together coordinate AMP. ATP is bound at residue Ala-214. Ala-214 provides a ligand contact to Mg(2+). Asp-218 is a binding site for CDP. Asp-218 provides a ligand contact to Mg(2+). Lys-219 is a binding site for AMP. Lys-219 contributes to the ATP binding site. Gly-237 is an ADP binding site. Gly-237 lines the CDP pocket. Residues Gly-238 and Gly-312 each contribute to the AMP site. The ATP site is built by Gly-238 and Gly-312. The CDP site is built by Gly-337 and Phe-342. Phe-342 contacts ADP. Glu-343 contributes to the AMP binding site. The ATP site is built by Glu-343, Asp-374, and Thr-375. A Mg(2+)-binding site is contributed by Asp-374.

Belongs to the phosphoglycerate kinase family. In terms of assembly, monomer. Mg(2+) serves as cofactor.

Its subcellular location is the cytoplasm. The protein resides in the mitochondrion. The catalysed reaction is (2R)-3-phosphoglycerate + ATP = (2R)-3-phospho-glyceroyl phosphate + ADP. It functions in the pathway carbohydrate degradation; glycolysis; pyruvate from D-glyceraldehyde 3-phosphate: step 2/5. In terms of biological role, catalyzes one of the two ATP producing reactions in the glycolytic pathway via the reversible conversion of 1,3-diphosphoglycerate to 3-phosphoglycerate. Both L- and D- forms of purine and pyrimidine nucleotides can be used as substrates, but the activity is much lower on pyrimidines. Negatively regulates the biosynthesis of acetyl-CoA from pyruvate in the mitochondrion. This chain is Phosphoglycerate kinase (PGK1), found in Candida maltosa (Yeast).